The chain runs to 540 residues: Alanine aminotransferase 2, mitochondrial (540 aa).

Residues 1-46 constitute a mitochondrion transit peptide; it reads MRRFLINQAKGLVDHSRRQHHHKSPSFLSPQPRPLASSPPALSRFF. The interval 11-40 is disordered; it reads GLVDHSRRQHHHKSPSFLSPQPRPLASSPP. The segment covering 28–40 has biased composition (low complexity); that stretch reads LSPQPRPLASSPP. An N6-(pyridoxal phosphate)lysine modification is found at Lys357.

This sequence belongs to the class-I pyridoxal-phosphate-dependent aminotransferase family. Alanine aminotransferase subfamily. Homodimer. Requires pyridoxal 5'-phosphate as cofactor. Post-translationally, the N-terminus is blocked. Expressed in shoots, essentially in leaves and flowers, mostly in vascular tissues. Also detected in stems and roots.

It is found in the mitochondrion. It carries out the reaction L-alanine + 2-oxoglutarate = pyruvate + L-glutamate. It participates in photosynthesis; C4 acid pathway. Its pathway is amino-acid degradation; L-alanine degradation via transaminase pathway; pyruvate from L-alanine: step 1/1. This Arabidopsis thaliana (Mouse-ear cress) protein is Alanine aminotransferase 2, mitochondrial (ALAAT2).